Consider the following 329-residue polypeptide: Putative methylthioribose-1-phosphate isomerase (329 aa).

Residues 50–52 (RGA), Arg-84, and Gln-182 contribute to the substrate site. The Proton donor role is filled by Asp-223. Substrate is bound at residue 233 to 234 (NK).

This sequence belongs to the eIF-2B alpha/beta/delta subunits family. MtnA subfamily.

It carries out the reaction 5-(methylsulfanyl)-alpha-D-ribose 1-phosphate = 5-(methylsulfanyl)-D-ribulose 1-phosphate. In terms of biological role, catalyzes the interconversion of methylthioribose-1-phosphate (MTR-1-P) into methylthioribulose-1-phosphate (MTRu-1-P). The chain is Putative methylthioribose-1-phosphate isomerase from Methanocaldococcus jannaschii (strain ATCC 43067 / DSM 2661 / JAL-1 / JCM 10045 / NBRC 100440) (Methanococcus jannaschii).